We begin with the raw amino-acid sequence, 717 residues long: Ribosomal RNA large subunit methyltransferase K/L (717 aa).

Positions 44-155 constitute a THUMP domain; that stretch reads DAYKVCIYSY…KQFVNVFLCL (112 aa).

It belongs to the methyltransferase superfamily. RlmKL family.

Its subcellular location is the cytoplasm. The catalysed reaction is guanosine(2445) in 23S rRNA + S-adenosyl-L-methionine = N(2)-methylguanosine(2445) in 23S rRNA + S-adenosyl-L-homocysteine + H(+). It carries out the reaction guanosine(2069) in 23S rRNA + S-adenosyl-L-methionine = N(2)-methylguanosine(2069) in 23S rRNA + S-adenosyl-L-homocysteine + H(+). Specifically methylates the guanine in position 2445 (m2G2445) and the guanine in position 2069 (m7G2069) of 23S rRNA. The sequence is that of Ribosomal RNA large subunit methyltransferase K/L from Francisella tularensis subsp. tularensis (strain WY96-3418).